The following is a 394-amino-acid chain: 3-phenylpropionate/cinnamic acid dioxygenase ferredoxin--NAD(+) reductase component (394 aa).

5 to 36 is an FAD binding site; it reads TFIIVGAGQAGAMAAATLRQQQFDGDIILIGK. 146 to 174 provides a ligand contact to NAD(+); the sequence is RILIVGGGVIGLELAATSCELGANVTVIE.

The protein belongs to the bacterial ring-hydroxylating dioxygenase ferredoxin reductase family. This dioxygenase system consists of four proteins: the two subunits of the hydroxylase component (HcaE and HcaF), a ferredoxin (HcaC) and a ferredoxin reductase (HcaD). The cofactor is FAD.

The enzyme catalyses 2 reduced [2Fe-2S]-[ferredoxin] + NAD(+) + H(+) = 2 oxidized [2Fe-2S]-[ferredoxin] + NADH. Its pathway is aromatic compound metabolism; 3-phenylpropanoate degradation. Functionally, part of the multicomponent 3-phenylpropionate dioxygenase, that converts 3-phenylpropionic acid (PP) and cinnamic acid (CI) into 3-phenylpropionate-dihydrodiol (PP-dihydrodiol) and cinnamic acid-dihydrodiol (CI-dihydrodiol), respectively. This is 3-phenylpropionate/cinnamic acid dioxygenase ferredoxin--NAD(+) reductase component from Photorhabdus laumondii subsp. laumondii (strain DSM 15139 / CIP 105565 / TT01) (Photorhabdus luminescens subsp. laumondii).